The following is a 250-amino-acid chain: Trypsin (250 aa).

The N-terminal stretch at 1 to 15 (MRLLALLLMVGAAVA) is a signal peptide. The propeptide at 16-22 (VPREDGR) is activation peptide. Residues 23–247 (IIGGHECAAH…FLGWIERTLE (225 aa)) form the Peptidase S1 domain. Cystine bridges form between Cys-29–Cys-163, Cys-47–Cys-63, Cys-133–Cys-236, Cys-140–Cys-209, Cys-174–Cys-188, and Cys-199–Cys-223. Residues His-62 and Asp-106 each act as charge relay system in the active site. Ser-203 acts as the Charge relay system in catalysis.

It belongs to the peptidase S1 family.

It is found in the secreted. Its subcellular location is the extracellular space. It catalyses the reaction Preferential cleavage: Arg-|-Xaa, Lys-|-Xaa.. In Pleuronectes platessa (European plaice), this protein is Trypsin.